The following is a 241-amino-acid chain: Uridylate kinase (241 aa).

Position 9–10 (9–10 (GS)) interacts with ATP. G44 serves as a coordination point for UMP. ATP-binding residues include G45 and R49. UMP contacts are provided by residues D66 and 114–120 (VVAGQTT). Residues T140, F146, and D149 each coordinate ATP.

Belongs to the UMP kinase family. As to quaternary structure, homohexamer.

The protein resides in the cytoplasm. The enzyme catalyses UMP + ATP = UDP + ADP. It participates in pyrimidine metabolism; CTP biosynthesis via de novo pathway; UDP from UMP (UMPK route): step 1/1. Its activity is regulated as follows. Inhibited by UTP. Functionally, catalyzes the reversible phosphorylation of UMP to UDP. The protein is Uridylate kinase of Halobacterium salinarum (strain ATCC 29341 / DSM 671 / R1).